Consider the following 159-residue polypeptide: Ribonuclease H (159 aa).

Positions 8-150 (NLKEITMYTD…CDQLAVAAAK (143 aa)) constitute an RNase H type-1 domain. Positions 17, 55, 77, and 142 each coordinate Mg(2+).

Belongs to the RNase H family. Monomer. The cofactor is Mg(2+).

The protein localises to the cytoplasm. It carries out the reaction Endonucleolytic cleavage to 5'-phosphomonoester.. Endonuclease that specifically degrades the RNA of RNA-DNA hybrids. This Desulforamulus reducens (strain ATCC BAA-1160 / DSM 100696 / MI-1) (Desulfotomaculum reducens) protein is Ribonuclease H.